The primary structure comprises 157 residues: MPIDQEKLAKLQKLSANNKVGGTRRKLNKKAGSSAGANKDDTKLQSQLAKLHAVTIDNVAEANFFKDDGKVMHFNKVGVQVAAQHNTSVFYGLPQEKNLQDLFPGIISQLGPEAIQALSQLAAQMEKHEAKAPADAEKKDEAIPELVEGQTFDADVE.

Disordered regions lie at residues 19 to 42 (KVGG…KDDT) and 126 to 157 (EKHE…ADVE). The 66-residue stretch at 38–103 (NKDDTKLQSQ…PQEKNLQDLF (66 aa)) folds into the NAC-A/B domain. The span at 126–142 (EKHEAKAPADAEKKDEA) shows a compositional bias: basic and acidic residues. The residue at position 151 (Thr151) is a Phosphothreonine.

This sequence belongs to the NAC-beta family. In terms of assembly, part of the nascent polypeptide-associated complex (NAC), consisting of EGD2 and either EGD1 or BTT1. NAC associates with ribosomes via EGD1 or BTT1, and with the CCR4-NOT complex.

Its subcellular location is the cytoplasm. The protein resides in the nucleus. Component of the nascent polypeptide-associated complex (NAC), a dynamic component of the ribosomal exit tunnel, protecting the emerging polypeptides from interaction with other cytoplasmic proteins to ensure appropriate nascent protein targeting. The NAC complex also promotes mitochondrial protein import by enhancing productive ribosome interactions with the outer mitochondrial membrane and blocks the inappropriate interaction of ribosomes translating non-secretory nascent polypeptides with translocation sites in the membrane of the endoplasmic reticulum. EGD1 may act as a transcription factor that exert a negative effect on the expression of several genes that are transcribed by RNA polymerase II. This is Nascent polypeptide-associated complex subunit beta-1 (EGD1) from Saccharomyces cerevisiae (strain YJM789) (Baker's yeast).